Reading from the N-terminus, the 287-residue chain is Ribosomal RNA small subunit methyltransferase A (287 aa).

Residues Asn28, Leu30, Gly55, Glu77, Asp103, and Asn123 each coordinate S-adenosyl-L-methionine.

It belongs to the class I-like SAM-binding methyltransferase superfamily. rRNA adenine N(6)-methyltransferase family. RsmA subfamily.

It is found in the cytoplasm. It carries out the reaction adenosine(1518)/adenosine(1519) in 16S rRNA + 4 S-adenosyl-L-methionine = N(6)-dimethyladenosine(1518)/N(6)-dimethyladenosine(1519) in 16S rRNA + 4 S-adenosyl-L-homocysteine + 4 H(+). Functionally, specifically dimethylates two adjacent adenosines (A1518 and A1519) in the loop of a conserved hairpin near the 3'-end of 16S rRNA in the 30S particle. May play a critical role in biogenesis of 30S subunits. This is Ribosomal RNA small subunit methyltransferase A from Rhodopseudomonas palustris (strain BisA53).